The sequence spans 338 residues: Mitochondrial transcription factor 1 (338 aa).

S-adenosyl-L-methionine is bound by residues Leu23, Asp76, Asp100, and Asn136.

This sequence belongs to the class I-like SAM-binding methyltransferase superfamily. rRNA adenine N(6)-methyltransferase family.

Its subcellular location is the mitochondrion. Its function is as follows. Mitochondrial transcription factor that confers selective promoter recognition on the core subunit of the yeast mitochondrial RNA polymerase. Interacts with DNA in a non-specific manner. This chain is Mitochondrial transcription factor 1 (MTF1), found in Lachancea kluyveri (Yeast).